Here is a 149-residue protein sequence, read N- to C-terminus: Large ribosomal subunit protein bL9 (149 aa).

This sequence belongs to the bacterial ribosomal protein bL9 family.

Binds to the 23S rRNA. This chain is Large ribosomal subunit protein bL9, found in Legionella pneumophila (strain Lens).